The following is a 73-amino-acid chain: Large ribosomal subunit protein bL32c (73 aa).

Belongs to the bacterial ribosomal protein bL32 family.

It is found in the plastid. It localises to the chloroplast. The polypeptide is Large ribosomal subunit protein bL32c (Jasminum nudiflorum (Winter jasmine)).